The following is a 394-amino-acid chain: Phosphopentomutase (394 aa).

Residues D13, D286, H291, D327, H328, and H339 each contribute to the Mn(2+) site.

Belongs to the phosphopentomutase family. Mn(2+) is required as a cofactor.

It is found in the cytoplasm. The enzyme catalyses 2-deoxy-alpha-D-ribose 1-phosphate = 2-deoxy-D-ribose 5-phosphate. The catalysed reaction is alpha-D-ribose 1-phosphate = D-ribose 5-phosphate. The protein operates within carbohydrate degradation; 2-deoxy-D-ribose 1-phosphate degradation; D-glyceraldehyde 3-phosphate and acetaldehyde from 2-deoxy-alpha-D-ribose 1-phosphate: step 1/2. Functionally, isomerase that catalyzes the conversion of deoxy-ribose 1-phosphate (dRib-1-P) and ribose 1-phosphate (Rib-1-P) to deoxy-ribose 5-phosphate (dRib-5-P) and ribose 5-phosphate (Rib-5-P), respectively. In Bacillus mycoides (strain KBAB4) (Bacillus weihenstephanensis), this protein is Phosphopentomutase.